Consider the following 1074-residue polypeptide: Phospholipase D1 (1074 aa).

Positions 81–212 (VKAQVLEVER…TEFLDVSQLS (132 aa)) constitute a PX domain. A PH domain is found at 219-328 (PKGLEGMIMK…WGGAIEEFIQ (110 aa)). Residues cysteine 240 and cysteine 241 are each lipidated (S-palmitoyl cysteine). Residues 459-486 (YLWAHHEKLVIIDQSVAFVGGIDLAYGR) form the PLD phosphodiesterase 1 domain. The tract at residues 463-928 (HHEKLVIIDQ…MLGKRDSEMA (466 aa)) is catalytic. Residues serine 499, serine 561, and serine 629 each carry the phosphoserine modification. In terms of domain architecture, PLD phosphodiesterase 2 spans 891 to 918 (ELIYVHSKLLIADDNTVIIGSANINDRS).

It belongs to the phospholipase D family. Interacts with PIP5K1B. In terms of processing, phosphorylated on serine and threonine residues. Post-translationally, it is uncertain whether palmitoylation is on Cys-240 and/or Cys-241. Palmitoylation is required prior to phosphorylation.

The protein localises to the cytoplasm. It localises to the perinuclear region. The protein resides in the endoplasmic reticulum membrane. It is found in the golgi apparatus membrane. Its subcellular location is the late endosome membrane. It carries out the reaction a 1,2-diacyl-sn-glycero-3-phosphocholine + H2O = a 1,2-diacyl-sn-glycero-3-phosphate + choline + H(+). The catalysed reaction is ethanol + a 1,2-diacyl-sn-glycero-3-phosphocholine = 1,2-diacyl-sn-glycero-3-phosphoethanol + choline. The enzyme catalyses 1,2-dihexadecanoyl-sn-glycero-3-phosphocholine + H2O = 1,2-dihexadecanoyl-sn-glycero-3-phosphate + choline + H(+). With respect to regulation, stimulated by phosphatidylinositol 4,5-bisphosphate and phosphatidylinositol 3,4,5-trisphosphate, activated by the phosphokinase C-alpha, by the ADP-ribosylation factor-1 (ARF-1), and to a lesser extent by GTP-binding proteins: RHO A, RAC-1 and CDC42. Inhibited by oleate. Function as phospholipase selective for phosphatidylcholine. Implicated as a critical step in numerous cellular pathways, including signal transduction, membrane trafficking, and the regulation of mitosis. May be involved in the regulation of perinuclear intravesicular membrane traffic. In Rattus norvegicus (Rat), this protein is Phospholipase D1.